A 158-amino-acid chain; its full sequence is Urease accessory protein UreE (158 aa).

It belongs to the UreE family.

It localises to the cytoplasm. Its function is as follows. Involved in urease metallocenter assembly. Binds nickel. Probably functions as a nickel donor during metallocenter assembly. The polypeptide is Urease accessory protein UreE (Microcystis aeruginosa (strain NIES-843 / IAM M-2473)).